A 134-amino-acid polypeptide reads, in one-letter code: Transcription antitermination protein NusB (134 aa).

It belongs to the NusB family.

Functionally, involved in transcription antitermination. Required for transcription of ribosomal RNA (rRNA) genes. Binds specifically to the boxA antiterminator sequence of the ribosomal RNA (rrn) operons. This is Transcription antitermination protein NusB from Shewanella amazonensis (strain ATCC BAA-1098 / SB2B).